The sequence spans 235 residues: Uridylate kinase (235 aa).

9 to 12 (KISG) contributes to the ATP binding site. Gly50 contributes to the UMP binding site. Residues Gly51 and Arg55 each contribute to the ATP site. UMP is bound by residues Asp70 and 131-138 (TGFPYFTT). ATP is bound by residues Asn159, Tyr165, and Asp168.

This sequence belongs to the UMP kinase family. Homohexamer; trimer of dimers.

It is found in the cytoplasm. The catalysed reaction is UMP + ATP = UDP + ADP. It participates in pyrimidine metabolism; CTP biosynthesis via de novo pathway; UDP from UMP (UMPK route): step 1/1. With respect to regulation, unlike other bacteria, is not activated by GTP. UTP is a competitive inhibitor against UMP and a non-competitive inhibitor toward ATP. Its function is as follows. Catalyzes the reversible phosphorylation of UMP to UDP, with ATP as the most efficient phosphate donor. Is also able to phosphorylate dUMP. This Ureaplasma parvum serovar 3 (strain ATCC 700970) protein is Uridylate kinase (pyrH).